A 456-amino-acid chain; its full sequence is Gamma-aminobutyric acid receptor subunit alpha-1 (456 aa).

Residues 1–27 (MRKSPGLSDYLWAWILLLSTLTGRSYG) form the signal peptide. Residues 28–253 (QPSLQDELKD…FHLKRKIGYF (226 aa)) lie on the Extracellular side of the membrane. The N-linked (GlcNAc...) asparagine glycan is linked to N38. Position 94 (R94) interacts with 4-aminobutanoate. N138 is a glycosylation site (N-linked (GlcNAc...) asparagine). 4-aminobutanoate is bound at residue T157. An intrachain disulfide couples C166 to C180. A helical membrane pass occupies residues 254–274 (VIQTYLPCIMTVILSQVSFWL). The Cytoplasmic segment spans residues 275-279 (NRESV). A helical transmembrane segment spans residues 280-301 (PARTVFGVTTVLTMTTLSISAR). Residues 302–311 (NSLPKVAYAT) are Extracellular-facing. A helical transmembrane segment spans residues 312–333 (AMDWFIAVCYAFVFSALIEFAT). At 334 to 421 (VNYFTKRGYA…TFNSVSKIDR (88 aa)) the chain is on the cytoplasmic side. The chain crosses the membrane as a helical span at residues 422-441 (LSRIAFPLLFGIFNLVYWAT). Residues 442–456 (YLNREPQLKAPTPHQ) are Extracellular-facing.

Belongs to the ligand-gated ion channel (TC 1.A.9) family. Gamma-aminobutyric acid receptor (TC 1.A.9.5) subfamily. GABRA1 sub-subfamily. In terms of assembly, heteropentamer, formed by a combination of alpha (GABRA1-6), beta (GABRB1-3), gamma (GABRG1-3), delta (GABRD), epsilon (GABRE), rho (GABRR1-3), pi (GABRP) and theta (GABRQ) subunits, each subunit exhibiting distinct physiological and pharmacological properties. Interacts with UBQLN1. Interacts with TRAK1. Interacts with KIF21B. Identified in a complex of 720 kDa composed of LHFPL4, NLGN2, GABRA1, GABRB2, GABRG2 and GABRB3. Interacts with LHFPL4. Interacts with NLGN2. Interacts with SHISA7; interaction leads to the regulation of GABA(A) receptor trafficking, channel deactivation kinetics and pharmacology.

The protein localises to the postsynaptic cell membrane. The protein resides in the cell membrane. Its subcellular location is the cytoplasmic vesicle membrane. The catalysed reaction is chloride(in) = chloride(out). Its activity is regulated as follows. Allosterically activated by benzodiazepines, the neuroanesthetic alphaxalone and pentobarbital. Inhibited by the antagonist bicuculline. Potentiated by histamine. Its function is as follows. Alpha subunit of the heteropentameric ligand-gated chloride channel gated by gamma-aminobutyric acid (GABA), a major inhibitory neurotransmitter in the brain. GABA-gated chloride channels, also named GABA(A) receptors (GABAAR), consist of five subunits arranged around a central pore and contain GABA active binding site(s) located at the alpha and beta subunit interface(s). When activated by GABA, GABAARs selectively allow the flow of chloride anions across the cell membrane down their electrochemical gradient. Alpha-1/GABRA1-containing GABAARs are largely synaptic. Chloride influx into the postsynaptic neuron following GABAAR opening decreases the neuron ability to generate a new action potential, thereby reducing nerve transmission. GABAARs containing alpha-1 and beta-2 or -3 subunits exhibit synaptogenic activity; the gamma-2 subunit being necessary but not sufficient to induce rapid synaptic contacts formation. GABAARs function also as histamine receptor where histamine binds at the interface of two neighboring beta subunits and potentiates GABA response. GABAARs containing alpha, beta and epsilon subunits also permit spontaneous chloride channel activity while preserving the structural information required for GABA-gated openings. Alpha-1-mediated plasticity in the orbitofrontal cortex regulates context-dependent action selection. Together with rho subunits, may also control neuronal and glial GABAergic transmission in the cerebellum. This chain is Gamma-aminobutyric acid receptor subunit alpha-1 (GABRA1), found in Macaca fascicularis (Crab-eating macaque).